Consider the following 271-residue polypeptide: Metal-staphylopine import system ATP-binding protein CntD (271 aa).

The ABC transporter domain maps to 6–251; it reads VKHLTITDTW…PEHVYTKYLL (246 aa). 38–45 serves as a coordination point for ATP; the sequence is GESGSGKS.

The protein belongs to the ABC transporter superfamily. In terms of assembly, the complex is composed of two ATP-binding proteins (CntD and CntF), two transmembrane proteins (CntB and CntC) and a solute-binding protein (CntA).

The protein resides in the cell membrane. Part of the ABC transporter complex CntABCDF (Opp1) involved in the uptake of metal in complex with the metallophore staphylopine (StP). May be involved in the import of a large array of divalent metals ions such as nickel, cobalt, zinc, copper and iron. Probably responsible for energy coupling to the transport system. This chain is Metal-staphylopine import system ATP-binding protein CntD, found in Staphylococcus aureus (strain Mu50 / ATCC 700699).